We begin with the raw amino-acid sequence, 1436 residues long: DNA polymerase III PolC-type (1436 aa).

In terms of domain architecture, Exonuclease spans 420-576 (YVVFDVETTG…YDTEATAYIF (157 aa)).

It belongs to the DNA polymerase type-C family. PolC subfamily.

The protein localises to the cytoplasm. The catalysed reaction is DNA(n) + a 2'-deoxyribonucleoside 5'-triphosphate = DNA(n+1) + diphosphate. In terms of biological role, required for replicative DNA synthesis. This DNA polymerase also exhibits 3' to 5' exonuclease activity. This Staphylococcus aureus (strain MW2) protein is DNA polymerase III PolC-type.